A 397-amino-acid polypeptide reads, in one-letter code: Exodeoxyribonuclease 7 large subunit (397 aa).

The protein belongs to the XseA family. In terms of assembly, heterooligomer composed of large and small subunits.

The protein localises to the cytoplasm. The enzyme catalyses Exonucleolytic cleavage in either 5'- to 3'- or 3'- to 5'-direction to yield nucleoside 5'-phosphates.. Bidirectionally degrades single-stranded DNA into large acid-insoluble oligonucleotides, which are then degraded further into small acid-soluble oligonucleotides. This chain is Exodeoxyribonuclease 7 large subunit, found in Anaplasma marginale (strain Florida).